A 60-amino-acid polypeptide reads, in one-letter code: Acidic phospholipase A2 (60 aa).

Ca(2+)-binding residues include Tyr-27, Gly-29, and Gly-31. A disulfide bridge links Cys-28 with Cys-44. His-47 is an active-site residue. Asp-48 contributes to the Ca(2+) binding site.

It belongs to the phospholipase A2 family. Group II subfamily. D49 sub-subfamily. Monomer. Ca(2+) serves as cofactor. As to expression, expressed by the venom gland.

It is found in the secreted. It carries out the reaction a 1,2-diacyl-sn-glycero-3-phosphocholine + H2O = a 1-acyl-sn-glycero-3-phosphocholine + a fatty acid + H(+). Functionally, snake venom phospholipase A2 (PLA2) that exhibits an indirect hemolytic activity, a low myotoxicity, and induces edema. In addition, this enzyme has been shown to induce the release of some pro- and anti-inflammatory cytokines from human PBMC (IL12B, TNF-alpha, IL1B and IL6 but not variation has been observed for IL-8 and IL-10). PLA2 catalyzes the calcium-dependent hydrolysis of the 2-acyl groups in 3-sn-phosphoglycerides. The protein is Acidic phospholipase A2 of Bothrops leucurus (Whitetail lancehead).